The following is a 162-amino-acid chain: Shikimate kinase (162 aa).

11–16 (GSGKSS) provides a ligand contact to ATP. Ser15 provides a ligand contact to Mg(2+). Asp33, Arg57, and Gly80 together coordinate substrate. The tract at residues 109 to 123 (NQKEREKRPLLNNLT) is LID domain. Position 116 (Arg116) interacts with ATP. A substrate-binding site is contributed by Arg132.

This sequence belongs to the shikimate kinase family. As to quaternary structure, monomer. Mg(2+) is required as a cofactor.

It is found in the cytoplasm. The catalysed reaction is shikimate + ATP = 3-phosphoshikimate + ADP + H(+). Its pathway is metabolic intermediate biosynthesis; chorismate biosynthesis; chorismate from D-erythrose 4-phosphate and phosphoenolpyruvate: step 5/7. Its function is as follows. Catalyzes the specific phosphorylation of the 3-hydroxyl group of shikimic acid using ATP as a cosubstrate. This chain is Shikimate kinase (aroK), found in Helicobacter pylori (strain ATCC 700392 / 26695) (Campylobacter pylori).